Here is an 86-residue protein sequence, read N- to C-terminus: Large ribosomal subunit protein bL27c (86 aa).

Residues 1-27 (MAHKKGSGSTRNGRDSNSKRLGVKKYG) are disordered.

This sequence belongs to the bacterial ribosomal protein bL27 family.

The protein resides in the plastid. It localises to the chloroplast. This is Large ribosomal subunit protein bL27c (rpl27) from Porphyra purpurea (Red seaweed).